A 2925-amino-acid chain; its full sequence is Otogelin (2925 aa).

A signal peptide spans 1–25 (MGVLASALCWLLCVWLPWGEQAAES). A disordered region spans residues 39–69 (GRSGARGMRNVKGMRNGPAQTRVSSSSSHQE). Over residues 56-69 (PAQTRVSSSSSHQE) the composition is skewed to polar residues. The EGF-like domain occupies 102–139 (HRAKCAPSYLFSCFNGGECVHPAFCDCRRFNATGPRCQ). 5 disulfide bridges follow: Cys106–Cys120, Cys114–Cys126, Cys128–Cys138, Cys152–Cys285, and Cys199–Cys206. Residues 150–322 (SICRAWGQHH…SWQEQAPNQP (173 aa)) form the VWFD 1 domain. Residues 316-335 (EQAPNQPPGPTTSSLPRPPC) are disordered. The segment covering 326 to 335 (TTSSLPRPPC) has biased composition (polar residues). The VWFD 2 domain occupies 512 to 688 (AECSVTGDIH…NSWKTLSACS (177 aa)). Intrachain disulfides connect Cys514/Cys652, Cys536/Cys687, and Cys558/Cys566. The 65-residue stretch at 780–844 (CEASKEYSPC…ADLCVPRNQC (65 aa)) folds into the TIL domain. The N-linked (GlcNAc...) asparagine glycan is linked to Asn914. In terms of domain architecture, VWFD 3 spans 984-1152 (STCTAYGDRH…SWAAVECPDT (169 aa)). 2 cysteine pairs are disulfide-bonded: Cys986–Cys1115 and Cys1030–Cys1037. A disordered region spans residues 1476–1540 (LGNETLPPSQ…PVVSPGPTQT (65 aa)). An N-linked (GlcNAc...) asparagine glycan is attached at Asn1478. Residues 1502–1528 (PRTPTHRPALTPAAPLTTALNPPVTAT) are compositionally biased toward low complexity. N-linked (GlcNAc...) asparagine glycosylation is present at Asn1612. 3 disordered regions span residues 1636 to 1679 (GHGS…HKAV), 1693 to 1715 (VPQP…AGTA), and 1737 to 1788 (KGEA…ASLS). Polar residues predominate over residues 1650-1659 (SLTASPSSRP). A compositionally biased stretch (low complexity) spans 1694 to 1708 (PQPTQAQSASSPSTP). Over residues 1751 to 1764 (SPQPHPLPSAPPRP) the composition is skewed to pro residues. The 180-residue stretch at 2110 to 2289 (CRCSIFPDLS…SWQVPSSLTS (180 aa)) folds into the VWFD 4 domain. Disulfide bonds link Cys2112–Cys2249, Cys2840–Cys2889, Cys2854–Cys2903, Cys2865–Cys2920, and Cys2869–Cys2922. The CTCK domain maps to 2840–2925 (CKKVTIRMTI…EPTDCACQWS (86 aa)).

It belongs to the otogelin family. N-glycosylated. Not O-glycosylated.

It localises to the apical cell membrane. The protein resides in the secreted. The protein localises to the extracellular space. In terms of biological role, glycoprotein specific to acellular membranes of the inner ear. May be required for the anchoring of the otoconial membranes and cupulae to the underlying neuroepithelia in the vestibule. May be involved in the organization and/or stabilization of the fibrillar network that compose the tectorial membrane in the cochlea. May play a role in mechanotransduction processes. The chain is Otogelin (OTOG) from Homo sapiens (Human).